Here is a 356-residue protein sequence, read N- to C-terminus: Neutral protease 2 homolog MEP5 (356 aa).

Residues 1–19 form the signal peptide; that stretch reads MRVSSSLIALAALAVQALA. Positions 20–179 are excised as a propeptide; sequence LPVNELAERD…ASAIPELDKR (160 aa). 2 disulfides stabilise this stretch: C187–C259 and C266–C284. H308 is a Zn(2+) binding site. The active site involves E309. Positions 312 and 323 each coordinate Zn(2+).

This sequence belongs to the peptidase M35 family. Zn(2+) is required as a cofactor.

It is found in the secreted. The enzyme catalyses Preferential cleavage of bonds with hydrophobic residues in P1'. Also 3-Asn-|-Gln-4 and 8-Gly-|-Ser-9 bonds in insulin B chain.. Secreted metalloproteinase that allows assimilation of proteinaceous substrates. Shows high activities on basic nuclear substrates such as histone and protamine. May be involved in virulence. The polypeptide is Neutral protease 2 homolog MEP5 (MEP5) (Coccidioides posadasii (strain C735) (Valley fever fungus)).